Reading from the N-terminus, the 520-residue chain is Nuclear GTP-binding protein NUG1 (520 aa).

Basic residues-rich tracts occupy residues 1-13 and 21-34; these read MRVRKRQSRRTST and KKASAHRKKEKKMA. Positions 1–53 are disordered; sequence MRVRKRQSRRTSTKLKEGIKKKASAHRKKEKKMAKKDVTWRSRSKKDPGIPSN. The span at 35 to 48 shows a compositional bias: basic and acidic residues; it reads KKDVTWRSRSKKDP. A CP-type G domain is found at 165–343; it reads YDKIFKSVID…ILDSPGICFP (179 aa). Residues 213–216, 287–294, and 336–339 contribute to the GTP site; these read NKVD, GYPNVGKS, and DSPG. Serine 337 is modified (phosphoserine).

The protein belongs to the TRAFAC class YlqF/YawG GTPase family.

Its subcellular location is the nucleus. Functionally, GTPase required for 60S ribosomal subunit export to the cytoplasm. The chain is Nuclear GTP-binding protein NUG1 (NUG1) from Saccharomyces cerevisiae (strain ATCC 204508 / S288c) (Baker's yeast).